Reading from the N-terminus, the 208-residue chain is Pyridoxine/pyridoxamine 5'-phosphate oxidase (208 aa).

Residues 55 to 60 (RMVLLK), 70 to 71 (YT), Lys76, Lys77, and Gln99 contribute to the FMN site. Residue Lys60 coordinates substrate. Substrate-binding residues include Tyr117, Arg121, and Ser125. FMN contacts are provided by residues 134-135 (QS) and Trp179. Position 185 to 187 (185 to 187 (RLH)) interacts with substrate. An FMN-binding site is contributed by Arg189.

The protein belongs to the pyridoxamine 5'-phosphate oxidase family. In terms of assembly, homodimer. The cofactor is FMN.

The enzyme catalyses pyridoxamine 5'-phosphate + O2 + H2O = pyridoxal 5'-phosphate + H2O2 + NH4(+). It carries out the reaction pyridoxine 5'-phosphate + O2 = pyridoxal 5'-phosphate + H2O2. It participates in cofactor metabolism; pyridoxal 5'-phosphate salvage; pyridoxal 5'-phosphate from pyridoxamine 5'-phosphate: step 1/1. The protein operates within cofactor metabolism; pyridoxal 5'-phosphate salvage; pyridoxal 5'-phosphate from pyridoxine 5'-phosphate: step 1/1. In terms of biological role, catalyzes the oxidation of either pyridoxine 5'-phosphate (PNP) or pyridoxamine 5'-phosphate (PMP) into pyridoxal 5'-phosphate (PLP). In Brucella ovis (strain ATCC 25840 / 63/290 / NCTC 10512), this protein is Pyridoxine/pyridoxamine 5'-phosphate oxidase.